The primary structure comprises 340 residues: Fructose-1,6-bisphosphatase class 1 (340 aa).

E107, D126, L128, and D129 together coordinate Mg(2+). N215 contacts substrate. Residue E287 coordinates Mg(2+).

This sequence belongs to the FBPase class 1 family. Homotetramer. Mg(2+) serves as cofactor.

It is found in the cytoplasm. It carries out the reaction beta-D-fructose 1,6-bisphosphate + H2O = beta-D-fructose 6-phosphate + phosphate. Its pathway is carbohydrate biosynthesis; gluconeogenesis. The protein is Fructose-1,6-bisphosphatase class 1 of Brucella ovis (strain ATCC 25840 / 63/290 / NCTC 10512).